Reading from the N-terminus, the 526-residue chain is Microphthalmia-associated transcription factor (526 aa).

The residue at position 5 (Ser5) is a Phosphoserine; by MTOR. Disordered stretches follow at residues 20-54 (EPKT…STMT) and 155-179 (VLSS…SAPN). Residues 34–44 (SSSSAEHSGAS) are compositionally biased toward low complexity. Ser180 bears the Phosphoserine; by MAPK mark. Positions 224–291 (DDVIDDIISL…PANLPNIKRE (68 aa)) are transactivation. Phosphoserine is present on Ser280. Residue Lys289 forms a Glycyl lysine isopeptide (Lys-Gly) (interchain with G-Cter in SUMO) linkage. The 54-residue stretch at 311–364 (QKKDNHNLIERRRRFNINDRIKELGTLIPKSNDPDMRWNKGTILKASVDYIRKL) folds into the bHLH domain. A coiled-coil region spans residues 355–401 (KASVDYIRKLQREQQRAKDLENRQKKLEHANRHLLLRVQELEMQARA). The leucine-zipper stretch occupies residues 374–395 (LENRQKKLEHANRHLLLRVQEL). A DNA-binding regulation region spans residues 401–431 (AHGLSLIPSTGLCSPDLVNRIIKQEPVLENC). Ser405 is modified (phosphoserine; by GSK3). Ser414 carries the post-translational modification Phosphoserine. Lys423 is covalently cross-linked (Glycyl lysine isopeptide (Lys-Gly) (interchain with G-Cter in SUMO)). Ser491 is subject to Phosphoserine. Residues 496 to 526 (TDPLLSSVSPGASKTSSRRSSMSAEETEHAC) are disordered. Residues 507 to 519 (ASKTSSRRSSMSA) are compositionally biased toward low complexity. Ser516 carries the phosphoserine; by RPS6KA1 modification.

The protein belongs to the MiT/TFE family. As to quaternary structure, homodimer or heterodimer; dimerization is mediated via the coiled coil region. Efficient DNA binding requires dimerization with another bHLH protein. Binds DNA in the form of homodimer or heterodimer with either TFE3, TFEB or TFEC. Interacts with small GTPases Rag (RagA/RRAGA, RagB/RRAGB, RagC/RRAGC and/or RagD/RRAGD); promoting its recruitment to lysosomal membrane in the presence of nutrients. Interacts with KARS1. Identified in a complex with HINT1 and CTNNB1. Interacts with VSX2. When nutrients are present, phosphorylation by MTOR at Ser-5 via non-canonical mTORC1 pathway promotes ubiquitination by the SCF(BTRC) complex, followed by degradation. Phosphorylation at Ser-405 significantly enhances the ability to bind the tyrosinase promoter. Phosphorylation by MARK3/cTAK1 at Ser-280 promotes association with 14-3-3/YWHA adapters and retention in the cytosol. Phosphorylated at Ser-180 and Ser-516 following KIT signaling, triggering a short live activation: Phosphorylation at Ser-180 and Ser-516 by MAPK and RPS6KA1, respectively, activate the transcription factor activity but also promote ubiquitination and subsequent degradation by the proteasome. Phosphorylated in response to blue light (415nm). In terms of processing, ubiquitinated by the SCF(BTRC) and SCF(FBXW11) complexes following phosphorylation ar Ser-5 by MTOR, leading to its degradation by the proteasome. Ubiquitinated following phosphorylation at Ser-180, leading to subsequent degradation by the proteasome. Deubiquitinated by USP13, preventing its degradation. In terms of tissue distribution, in the adult, expressed at high levels in the heart, skin, skeletal muscle, intestine, stomach, kidney, ovary, lung, spleen and brain. In the embryo, expressed in developing eye, ear, skin and heart. Isoform M is expressed in melanocytes and also in the embryonic and adult heart while isoform A and isoform H are more widely expressed.

It is found in the nucleus. The protein resides in the cytoplasm. Its subcellular location is the lysosome membrane. Its function is as follows. Transcription factor that acts as a master regulator of melanocyte survival and differentiation as well as melanosome biogenesis. Binds to M-boxes (5'-TCATGTG-3') and symmetrical DNA sequences (E-boxes) (5'-CACGTG-3') found in the promoter of pigmentation genes, such as tyrosinase (TYR). Involved in the cellular response to amino acid availability by acting downstream of MTOR: in the presence of nutrients, MITF phosphorylation by MTOR promotes its inactivation. Upon starvation or lysosomal stress, inhibition of MTOR induces MITF dephosphorylation, resulting in transcription factor activity. Plays an important role in melanocyte development by regulating the expression of tyrosinase (TYR) and tyrosinase-related protein 1 (TYRP1). Plays a critical role in the differentiation of various cell types, such as neural crest-derived melanocytes, mast cells, osteoclasts and optic cup-derived retinal pigment epithelium. This Mus musculus (Mouse) protein is Microphthalmia-associated transcription factor (Mitf).